We begin with the raw amino-acid sequence, 150 residues long: Large ribosomal subunit protein bL9 (150 aa).

Belongs to the bacterial ribosomal protein bL9 family.

Its function is as follows. Binds to the 23S rRNA. The chain is Large ribosomal subunit protein bL9 from Albidiferax ferrireducens (strain ATCC BAA-621 / DSM 15236 / T118) (Rhodoferax ferrireducens).